The primary structure comprises 323 residues: Prenyl transferase (323 aa).

The isopentenyl diphosphate site is built by Lys46, Arg49, and His81. 2 residues coordinate Mg(2+): Asp88 and Asp92. An all-trans-polyprenyl diphosphate is bound at residue Arg97. Residue Arg98 participates in isopentenyl diphosphate binding. Positions 174, 175, and 212 each coordinate an all-trans-polyprenyl diphosphate.

It belongs to the FPP/GGPP synthase family. Requires Mg(2+) as cofactor.

Functionally, possible role in synthesis of the nonaprenyl side chain of plastoquinone or in synthesis of other prenyl chains such as undekaprenyl pyrophosphate. This chain is Prenyl transferase (preA), found in Synechocystis sp. (strain ATCC 27184 / PCC 6803 / Kazusa).